We begin with the raw amino-acid sequence, 537 residues long: 5,6-dihydroxyindole-2-carboxylic acid oxidase (537 aa).

An N-terminal signal peptide occupies residues 1–24 (MKSPTLLSLGYMFLVLLFFQQAWA). Residues 25–477 (QFPRECATIE…WPSRSFSISE (453 aa)) lie on the Lumenal, melanosome side of the membrane. Intrachain disulfides connect Cys30/Cys41, Cys42/Cys65, Cys56/Cys99, Cys101/Cys110, and Cys113/Cys122. Residues Asn96 and Asn104 are each glycosylated (N-linked (GlcNAc...) asparagine). Asn181 is a glycosylation site (N-linked (GlcNAc...) asparagine). The Zn(2+) site is built by His192, His215, and His224. 2 cysteine pairs are disulfide-bonded: Cys258–Cys261 and Cys290–Cys303. Asn304 and Asn350 each carry an N-linked (GlcNAc...) asparagine glycan. Zn(2+)-binding residues include His377 and His381. A glycan (N-linked (GlcNAc...) asparagine) is linked at Asn385. A Zn(2+)-binding site is contributed by His404. The chain crosses the membrane as a helical span at residues 478-501 (IVTIAVVAALSLVAVIFAGASCLI). The Cytoplasmic segment spans residues 502-537 (RARSNMDEANQPLLTDQYQHYIEEYEKIHNPNQSVV).

This sequence belongs to the tyrosinase family. Monomer. Interacts with ATP7A. Interacts with SLC45A2. It depends on Cu(2+) as a cofactor. Zn(2+) is required as a cofactor. In terms of processing, glycosylated.

It is found in the melanosome membrane. The enzyme catalyses 2 5,6-dihydroxyindole-2-carboxylate + O2 = 2 indole-5,6-quinone-2-carboxylate + 2 H2O. The protein operates within pigment biosynthesis; melanin biosynthesis. Functionally, plays a role in melanin biosynthesis. Catalyzes the oxidation of 5,6-dihydroxyindole-2-carboxylic acid (DHICA) into indole-5,6-quinone-2-carboxylic acid. May regulate or influence the type of melanin synthesized. Also to a lower extent, capable of hydroxylating tyrosine and producing melanin. This chain is 5,6-dihydroxyindole-2-carboxylic acid oxidase (TYRP1), found in Bos taurus (Bovine).